The primary structure comprises 664 residues: ATP synthase subunit alpha 2 (664 aa).

180-187 (GDRATGKT) is an ATP binding site. The tract at residues 525-664 (MPAEDAAGDI…DAEAEARHKR (140 aa)) is disordered. Residues 543 to 588 (ARGDADRDADHGANREVSREVSPEASREVSREVSCEVSHEADRDAA) are compositionally biased toward basic and acidic residues. The segment covering 589–599 (ADAARVAGRAP) has biased composition (low complexity). The segment covering 621–639 (ADGDRASASRPRPDARGDA) has biased composition (basic and acidic residues).

The protein belongs to the ATPase alpha/beta chains family. In terms of assembly, F-type ATPases have 2 components, CF(1) - the catalytic core - and CF(0) - the membrane proton channel. CF(1) has five subunits: alpha(3), beta(3), gamma(1), delta(1), epsilon(1). CF(0) has three main subunits: a(1), b(2) and c(9-12). The alpha and beta chains form an alternating ring which encloses part of the gamma chain. CF(1) is attached to CF(0) by a central stalk formed by the gamma and epsilon chains, while a peripheral stalk is formed by the delta and b chains.

Its subcellular location is the cell inner membrane. The catalysed reaction is ATP + H2O + 4 H(+)(in) = ADP + phosphate + 5 H(+)(out). In terms of biological role, produces ATP from ADP in the presence of a proton gradient across the membrane. The alpha chain is a regulatory subunit. The protein is ATP synthase subunit alpha 2 of Burkholderia pseudomallei (strain 1710b).